The chain runs to 200 residues: MASLYVGDLHPEVTEAMLYEKFSPAGPILSIRICRDKITRRSLGYAYVNYQQPVDAKRALETLNFDVIKGRPVRIMWSQRDPSLRKSGVGNVFIKNLGKTIDNKALYNIFSAFGNILSCKVACDEKGPKGYGFVHFQKQESAERAIDVMNGMFLNYRKIFVGRFKSHKEREAERGAWARQSTSADVKDFEEDTDEEATLR.

RRM domains are found at residues 2-80 (ASLY…WSQR) and 90-166 (GNVF…RFKS). The interval 170 to 200 (REAERGAWARQSTSADVKDFEEDTDEEATLR) is disordered. Residues 188–200 (DFEEDTDEEATLR) are compositionally biased toward acidic residues.

This chain is Polyadenylate-binding protein 1-like 2 (PABPC1L2A), found in Homo sapiens (Human).